A 95-amino-acid chain; its full sequence is Opiscorpine-4 (95 aa).

The first 19 residues, 1 to 19 (MNNKLTALIFLGLLAIASC), serve as a signal peptide directing secretion. One can recognise a BetaSPN-type CS-alpha/beta domain in the interval 55–95 (EFMCVANIDMTKSCDTHCQKASGEKGYCHGTKCKCGVPLSY). 3 cysteine pairs are disulfide-bonded: Cys58-Cys82, Cys68-Cys87, and Cys72-Cys89.

The protein belongs to the long chain scorpion toxin family. Class 3 subfamily. As to expression, expressed by the venom gland.

It is found in the secreted. In terms of biological role, has antimicrobial activity against yeasts and bacteria. This is Opiscorpine-4 from Opistophthalmus carinatus (African yellow leg scorpion).